The sequence spans 724 residues: Hyaluronan mediated motility receptor (724 aa).

Disordered regions lie at residues 1–22 and 40–81; these read MSFP…PSPG and KSQR…QKND. Serine 20 is modified (phosphoserine). 2 stretches are compositionally biased toward basic and acidic residues: residues 46–60 and 70–81; these read QQKE…DKDT and KSSESKESQKND. N-linked (GlcNAc...) asparagine glycosylation is found at asparagine 133, asparagine 477, asparagine 567, and asparagine 588. Residues 365 to 546 form a required for interaction with FAM83D region; it reads EEMVKEKNLF…ITDLQNQLKQ (182 aa). 2 hyaluronic acid-binding regions span residues 635 to 645 and 657 to 666; these read KQKIKHVVKLK and KLRCQLAKKK. Threonine 703 is subject to Phosphothreonine.

Interacts with ANKRD26. Interacts with DYNLL1. Interacts with FAM83D/CHICA. As to expression, expressed in testis. Expressed in the breast.

Its subcellular location is the cell surface. The protein resides in the cytoplasm. It localises to the cytoskeleton. The protein localises to the spindle. In terms of biological role, receptor for hyaluronic acid (HA). Involved in cell motility. When hyaluronan binds to HMMR, the phosphorylation of a number of proteins, including PTK2/FAK1 occurs. May also be involved in cellular transformation and metastasis formation, and in regulating extracellular-regulated kinase (ERK) activity. May act as a regulator of adipogenisis. The protein is Hyaluronan mediated motility receptor (HMMR) of Homo sapiens (Human).